We begin with the raw amino-acid sequence, 181 residues long: Anthrone oxygenase encC (181 aa).

Transmembrane regions (helical) follow at residues 1 to 21 (MASV…WLSG), 65 to 81 (QIAA…AWCA), 88 to 108 (LLYG…LLFM), and 153 to 173 (FLAG…LFAA).

The protein belongs to the anthrone oxygenase family. In terms of tissue distribution, endocrocin is specifically produced in conidia.

The protein localises to the membrane. Functionally, anthrone oxygenase; part of the gene cluster that mediates the biosynthesis of endocrocin, a simple anthraquinone interesting for many biotechnological applications. The pathway begins with the synthesis of atrochrysone thioester by the polyketide synthase (PKS) encA. The atrochrysone carboxyl ACP thioesterase encB then breaks the thioester bond and releases the atrochrysone carboxylic acid from encA. The atrochrysone carboxylic acid is then converted to endocrocin anthrone which is further oxidized into endocrocin by the anthrone oxygenase encC. The exact function of encD has not been identified yet, but it negatively regulates endocrocin production, likely through the modification of endocrocin itself. This Aspergillus fumigatus (strain ATCC MYA-4609 / CBS 101355 / FGSC A1100 / Af293) (Neosartorya fumigata) protein is Anthrone oxygenase encC.